The following is a 214-amino-acid chain: cAMP-activated global transcriptional regulator Vfr (214 aa).

3',5'-cyclic AMP is bound by residues 59-60 (RE), 73-75 (GEL), 87-88 (RS), 132-133 (TT), Arg-179, and Arg-185. The HTH crp-type domain maps to 142 to 214 (LDVTGRVART…GKTMVVFGTR (73 aa)). The segment at residues 174–193 (RQEIGRIVGCSREMVGRVLK) is a DNA-binding region (H-T-H motif).

In terms of assembly, homodimer.

Global cAMP-dependent transcriptional regulator that controls virulence gene expression by distinct cAMP-dependent and -independent mechanisms, which allow to fine tune its virulence program in response to specific host cues or environments. Controls the expression of many regulatory targets including type II, type III and type IV secretion systems, flagellar-mediated motility, and quorum sensing systems. Transcriptional control is exerted by binding to a well-characterized consensus site (5'-ANWWTGNGAWNYAGWTCACAT) within target promoters. Directly binds to the toxA upstream region to regulate exotoxin A production, to the lasR gene promoter to activate the las quorum-sensing system or to the exsA promoter to regulate type III secretion system. Autoregulates as well its own expression. In Pseudomonas aeruginosa (strain ATCC 15692 / DSM 22644 / CIP 104116 / JCM 14847 / LMG 12228 / 1C / PRS 101 / PAO1), this protein is cAMP-activated global transcriptional regulator Vfr (vfr).